A 156-amino-acid chain; its full sequence is Transcription antitermination protein NusB (156 aa).

Belongs to the NusB family.

In terms of biological role, involved in transcription antitermination. Required for transcription of ribosomal RNA (rRNA) genes. Binds specifically to the boxA antiterminator sequence of the ribosomal RNA (rrn) operons. In Rickettsia africae (strain ESF-5), this protein is Transcription antitermination protein NusB.